A 173-amino-acid polypeptide reads, in one-letter code: MNTDAIESMVRDVLSRMNSLQGDAPAAAPAAGGTSRSAKVSDYPLANKHPEWVKTATNKTLDDFTLENVLSNKVTAQDMRITPETLRLQASIAKDAGRDRLAMNFERAAELTAVPDDRILEIYNALRPYRSTKEELLAIADDLENRYQAKICAAFVREAAGLYVERKKLKGDD.

This sequence belongs to the diol/glycerol dehydratase small subunit family. In terms of assembly, the propanediol dehydratase enzyme is a heterotrimeric complex composed of a large (PduC), a medium (PduD) and a small (PduE) subunit. Adenosylcob(III)alamin serves as cofactor.

The protein resides in the bacterial microcompartment. It catalyses the reaction propane-1,2-diol = propanal + H2O. It participates in polyol metabolism; 1,2-propanediol degradation. Its activity is regulated as follows. Inhibited by glycerol. In terms of biological role, part of the PduCDE complex that catalyzes the dehydration of 1,2-propanediol (1,2-PD) to propionaldehyde. Required for S.typhimurium growth on 1,2-PD as the sole carbon and energy source. Localized in the bacterial microcompartment (BMC) dedicated to 1,2-PD degradation. Functionally, the 1,2-PD-specific bacterial microcompartment (BMC) concentrates low levels of 1,2-PD catabolic enzymes, concentrates volatile reaction intermediates thus enhancing pathway flux and keeps the level of toxic, mutagenic propionaldehyde low. The chain is Propanediol dehydratase small subunit from Salmonella typhimurium (strain LT2 / SGSC1412 / ATCC 700720).